Reading from the N-terminus, the 264-residue chain is NAD-capped RNA hydrolase NudC (264 aa).

Residue Arg70 coordinates substrate. Positions 99 and 102 each coordinate Zn(2+). Glu112 is a binding site for substrate. Residues Cys117 and Cys120 each contribute to the Zn(2+) site. Substrate is bound at residue Tyr125. In terms of domain architecture, Nudix hydrolase spans 126 to 253 (PVICPSIIVA…TIARKLIHVT (128 aa)). A divalent metal cation-binding residues include Ala162, Glu178, and Glu182. Residues 163–184 (GFVEVGETFEQAVQREVFEETG) carry the Nudix box motif. A substrate-binding site is contributed by 196–203 (QPWAFPNS). Position 223 (Glu223) interacts with a divalent metal cation. Position 246 (Ala246) interacts with substrate.

It belongs to the Nudix hydrolase family. NudC subfamily. As to quaternary structure, homodimer. The cofactor is Mg(2+). Requires Mn(2+) as cofactor. Zn(2+) is required as a cofactor.

The catalysed reaction is a 5'-end NAD(+)-phospho-ribonucleoside in mRNA + H2O = a 5'-end phospho-adenosine-phospho-ribonucleoside in mRNA + beta-nicotinamide D-ribonucleotide + 2 H(+). It carries out the reaction NAD(+) + H2O = beta-nicotinamide D-ribonucleotide + AMP + 2 H(+). It catalyses the reaction NADH + H2O = reduced beta-nicotinamide D-ribonucleotide + AMP + 2 H(+). MRNA decapping enzyme that specifically removes the nicotinamide adenine dinucleotide (NAD) cap from a subset of mRNAs by hydrolyzing the diphosphate linkage to produce nicotinamide mononucleotide (NMN) and 5' monophosphate mRNA. The NAD-cap is present at the 5'-end of some mRNAs and stabilizes RNA against 5'-processing. Has preference for mRNAs with a 5'-end purine. Catalyzes the hydrolysis of a broad range of dinucleotide pyrophosphates. This Haemophilus influenzae (strain 86-028NP) protein is NAD-capped RNA hydrolase NudC.